The following is a 129-amino-acid chain: Protein yippee-like (129 aa).

The region spanning 12–109 is the Yippee domain; sequence KIYSCKHCGT…LERFKITGPD (98 aa). Zn(2+) contacts are provided by cysteine 16, cysteine 19, cysteine 72, and cysteine 75.

Belongs to the yippee family.

The chain is Protein yippee-like from Solanum tuberosum (Potato).